Reading from the N-terminus, the 246-residue chain is MALLRGVWGVLNALGKSGADLCAGCGSRLRYPFSFAYVPKWFSSSLSGYPKKPMTSYVRFSKEQLPIFKAQNPDAKNSELIKKIAKLWRELPDSEKKIYEDAYRADWQVYKEEINRIQEQLTPSQMVSLEKEIMQKRLKKKALIKKRELTMLGKPKRPRSAYNIFIAERFQEARDGTSQVKLKAINENWKNLSNSQKQVYIQLAKDDKIRYYNEMKSWEEQMMEVGREDLIRRSIKYPAKNDPEKF.

A mitochondrion-targeting transit peptide spans 1 to 42; it reads MALLRGVWGVLNALGKSGADLCAGCGSRLRYPFSFAYVPKWF. Positions 50–118 form a DNA-binding region, HMG box 1; the sequence is PKKPMTSYVR…VYKEEINRIQ (69 aa). S56 and S61 each carry phosphoserine; by PKA. At T122 the chain carries Phosphothreonine. The segment at residues 155–219 is a DNA-binding region (HMG box 2); the sequence is PKRPRSAYNI…RYYNEMKSWE (65 aa). S160 carries the phosphoserine; by PKA modification. A phosphoserine mark is found at S193 and S195.

In terms of assembly, monomer; binds DNA as a monomer. Homodimer. Component of the mitochondrial transcription initiation complex, composed at least of TFB2M, TFAM and POLRMT. In this complex TFAM recruits POLRMT to the promoter whereas TFB2M induces structural changes in POLRMT to enable promoter opening and trapping of the DNA non-template strand. Upon metabolic stress, forms a complex composed of FOXO3, SIRT3, TFAM and POLRMT. Interacts with TFB1M and TFB2M. Interacts with CLPX; this enhances DNA-binding. Phosphorylation by PKA within the HMG box 1 impairs DNA binding and promotes degradation by the AAA+ Lon protease.

The protein resides in the mitochondrion. It is found in the mitochondrion matrix. Its subcellular location is the mitochondrion nucleoid. In terms of biological role, binds to the mitochondrial light strand promoter and functions in mitochondrial transcription regulation. Component of the mitochondrial transcription initiation complex, composed at least of TFB2M, TFAM and POLRMT that is required for basal transcription of mitochondrial DNA. In this complex, TFAM recruits POLRMT to a specific promoter whereas TFB2M induces structural changes in POLRMT to enable promoter opening and trapping of the DNA non-template strand. Required for accurate and efficient promoter recognition by the mitochondrial RNA polymerase. Promotes transcription initiation from the HSP1 and the light strand promoter by binding immediately upstream of transcriptional start sites. Is able to unwind DNA. Bends the mitochondrial light strand promoter DNA into a U-turn shape via its HMG boxes. Required for maintenance of normal levels of mitochondrial DNA. May play a role in organizing and compacting mitochondrial DNA. In Bos taurus (Bovine), this protein is Transcription factor A, mitochondrial.